We begin with the raw amino-acid sequence, 100 residues long: Integration host factor subunit alpha (100 aa).

The protein belongs to the bacterial histone-like protein family. As to quaternary structure, heterodimer of an alpha and a beta chain.

Functionally, this protein is one of the two subunits of integration host factor, a specific DNA-binding protein that functions in genetic recombination as well as in transcriptional and translational control. This is Integration host factor subunit alpha from Caulobacter vibrioides (strain ATCC 19089 / CIP 103742 / CB 15) (Caulobacter crescentus).